Consider the following 508-residue polypeptide: Methionine--tRNA ligase (508 aa).

A 'HIGH' region motif is present at residues 12–22 (YYVNDIPHIGH). The 'KMSKS' region signature appears at 295-299 (KISKS). K298 provides a ligand contact to ATP.

Belongs to the class-I aminoacyl-tRNA synthetase family. MetG type 2B subfamily. Monomer.

Its subcellular location is the cytoplasm. It carries out the reaction tRNA(Met) + L-methionine + ATP = L-methionyl-tRNA(Met) + AMP + diphosphate. Functionally, is required not only for elongation of protein synthesis but also for the initiation of all mRNA translation through initiator tRNA(fMet) aminoacylation. The protein is Methionine--tRNA ligase of Rickettsia conorii (strain ATCC VR-613 / Malish 7).